Consider the following 569-residue polypeptide: Glutamyl-tRNA reductase (569 aa).

Substrate is bound by residues 49–52, S109, 114–116, and Q120; these read TCNR and EGQ. Residue C50 is the Nucleophile of the active site. 192–197 serves as a coordination point for NADP(+); the sequence is GAGSMS. The interval 284 to 397 is insert; the sequence is PVAVREETPA…VEAPRPAPAL (114 aa). The interval 546 to 569 is disordered; it reads AAVSRADDRDTSDSTENAKNRGRE. Over residues 550-569 the composition is skewed to basic and acidic residues; the sequence is RADDRDTSDSTENAKNRGRE.

It belongs to the glutamyl-tRNA reductase family. Homodimer.

The catalysed reaction is (S)-4-amino-5-oxopentanoate + tRNA(Glu) + NADP(+) = L-glutamyl-tRNA(Glu) + NADPH + H(+). The protein operates within porphyrin-containing compound metabolism; protoporphyrin-IX biosynthesis; 5-aminolevulinate from L-glutamyl-tRNA(Glu): step 1/2. Catalyzes the NADPH-dependent reduction of glutamyl-tRNA(Glu) to glutamate 1-semialdehyde (GSA). The polypeptide is Glutamyl-tRNA reductase (Streptomyces avermitilis (strain ATCC 31267 / DSM 46492 / JCM 5070 / NBRC 14893 / NCIMB 12804 / NRRL 8165 / MA-4680)).